A 1518-amino-acid chain; its full sequence is Probable serine/threonine-protein kinase HSL1 (1518 aa).

Disordered regions lie at residues 1 to 43 (MTGH…GHLE) and 55 to 83 (RLSQ…PWKL). Positions 55–68 (RLSQPDSTVSVATK) are enriched in polar residues. A Protein kinase domain is found at 81–369 (WKLGKTLGKG…TQEILKHPLI (289 aa)). ATP contacts are provided by residues 87–95 (LGKGSSGRV) and Lys-110. Asp-239 serves as the catalytic Proton acceptor. Residues 467-502 (LSSSSENKKSATESSVNEPRIEYASKTANNTGLRSE) form a disordered region. Over residues 492–501 (KTANNTGLRS) the composition is skewed to polar residues. The residue at position 511 (Ser-511) is a Phosphoserine. The segment covering 599-611 (SNSRLSLSASTSR) has biased composition (low complexity). Residues 599–651 (SNSRLSLSASTSRETVHDNEMPLPQLPKSPSRYSLSRRAIHASPSTKSIHKSL) form a disordered region. A phosphoserine mark is found at Ser-629 and Ser-685. Residues 741–783 (EEEDNEKERDTQRQRQNDTKSSADTFTISGVSTNKENEGPEYP) form a disordered region. Over residues 746–758 (EKERDTQRQRQND) the composition is skewed to basic and acidic residues. A compositionally biased stretch (polar residues) spans 759-774 (TKSSADTFTISGVSTN). A phosphoserine mark is found at Ser-837 and Ser-866. Positions 856 to 876 (EQLQKKNDRPSPLKPIQHQEL) are enriched in basic and acidic residues. Disordered stretches follow at residues 856-898 (EQLQ…RRNI), 1005-1030 (DDKH…KQSA), 1150-1170 (APSD…RASV), and 1220-1243 (SPEN…RDSN). Phosphoserine is present on Ser-1220. The segment covering 1222–1243 (ENPSNTHMQKRFSSTRGSRDSN) has biased composition (polar residues). Phosphoserine is present on Ser-1250. The segment at 1259-1291 (EEDQDGHTSQADILESSMSYSKRRPSEESVNPK) is disordered. Residues 1265 to 1278 (HTSQADILESSMSY) are compositionally biased toward polar residues. A phosphoserine mark is found at Ser-1284, Ser-1287, and Ser-1325.

This sequence belongs to the protein kinase superfamily. CAMK Ser/Thr protein kinase family. NIM1 subfamily.

The protein localises to the bud neck. It catalyses the reaction L-seryl-[protein] + ATP = O-phospho-L-seryl-[protein] + ADP + H(+). It carries out the reaction L-threonyl-[protein] + ATP = O-phospho-L-threonyl-[protein] + ADP + H(+). The sequence is that of Probable serine/threonine-protein kinase HSL1 (HSL1) from Saccharomyces cerevisiae (strain ATCC 204508 / S288c) (Baker's yeast).